Consider the following 340-residue polypeptide: MIAARAANLQVAMKALALAVLALAYAAATARAEQCGRQAGGARCPNRLCCSRWGWCGLTDDYCKGGCQSQCRVSRDGGDDDVAAVLLTAPGGGRAGVASVVTSDQFERMLPHRDDAACPARGFYAYRAFVAAAGAFPAFAATGDADTRKREVAAFLAQTSHATSGGPYSWGYCYKEVKGATSDFCVPNARWPCAPGKAYHARGPMQIAYNYNYGAAGEAIGADLLGNPELVATDPTVAFKTALWLWMTARSPSQPSPHAVVTGQWTPTPADSAAGRAPGYGLTTNILTGGLQCAGGNGGADRVAFYKRYCDVLGVGYGPNLDCFGQAPFDGGIMSASAAK.

Positions 1–32 are cleaved as a signal peptide; sequence MIAARAANLQVAMKALALAVLALAYAAATARA. The Chitin-binding type-1 domain maps to 33-73; it reads EQCGRQAGGARCPNRLCCSRWGWCGLTDDYCKGGCQSQCRV. 7 disulfide bridges follow: Cys35–Cys50, Cys44–Cys56, Cys49–Cys63, Cys67–Cys71, Cys118–Cys173, Cys185–Cys193, and Cys293–Cys323.

Belongs to the glycosyl hydrolase 19 family. Chitinase class I subfamily. In terms of tissue distribution, expressed in pistils, stamens and lodicules.

It carries out the reaction Random endo-hydrolysis of N-acetyl-beta-D-glucosaminide (1-&gt;4)-beta-linkages in chitin and chitodextrins.. Its function is as follows. Hydrolyzes chitin and may play a role in defense against fungal pathogens containing chitin. This Oryza sativa subsp. indica (Rice) protein is Chitinase 7 (Cht7).